A 371-amino-acid chain; its full sequence is Glutamate 5-kinase (371 aa).

Lys-8 is an ATP binding site. Residues Ser-49, Asp-136, and Asn-149 each contribute to the substrate site. ATP contacts are provided by residues 169–170 (TD) and 213–219 (TGGMATK). In terms of domain architecture, PUA spans 278–356 (TGKLILDDGA…EDIPQVLGYA (79 aa)).

It belongs to the glutamate 5-kinase family.

The protein localises to the cytoplasm. It carries out the reaction L-glutamate + ATP = L-glutamyl 5-phosphate + ADP. It functions in the pathway amino-acid biosynthesis; L-proline biosynthesis; L-glutamate 5-semialdehyde from L-glutamate: step 1/2. In terms of biological role, catalyzes the transfer of a phosphate group to glutamate to form L-glutamate 5-phosphate. The chain is Glutamate 5-kinase from Acaryochloris marina (strain MBIC 11017).